Here is a 366-residue protein sequence, read N- to C-terminus: Alcohol dehydrogenase (366 aa).

Residues cysteine 41, histidine 62, glutamate 63, and aspartate 167 each coordinate Zn(2+).

Belongs to the zinc-containing alcohol dehydrogenase family. As to quaternary structure, homotetramer. The cofactor is Zn(2+).

It catalyses the reaction a primary alcohol + NAD(+) = an aldehyde + NADH + H(+). It carries out the reaction a secondary alcohol + NAD(+) = a ketone + NADH + H(+). The catalysed reaction is (R,R)-butane-2,3-diol + NAD(+) = (R)-acetoin + NADH + H(+). The enzyme catalyses an aldehyde + NAD(+) + H2O = a carboxylate + NADH + 2 H(+). In terms of biological role, multifunctional alcohol dehydrogenase exhibiting NAD(+)-dependent dehydrogenase activities for 2,3-butanediol, ethanol and acetaldehyde, and reductase activities for acetoin (NADH-dependent), and diacetyl and acetaldehyde (independently of whether NADH or NADPH is the reductant). The rate of oxidation of 2,3-butanediol is much higher than for the oxidation of ethanol. Has acetaldehyde dehydrogenase activity leading to acetate formation. May function in the release of excess reducing power in the absence of exogenous hydrogen acceptors such as oxygen. The chain is Alcohol dehydrogenase (adh) from Cupriavidus necator (strain ATCC 17699 / DSM 428 / KCTC 22496 / NCIMB 10442 / H16 / Stanier 337) (Ralstonia eutropha).